Reading from the N-terminus, the 696-residue chain is HIPL2 protein (696 aa).

A signal peptide spans 1 to 24 (MAKTNQAITICSLLLLLLLSETTS). 14 N-linked (GlcNAc...) asparagine glycosylation sites follow: asparagine 38, asparagine 69, asparagine 74, asparagine 108, asparagine 124, asparagine 148, asparagine 175, asparagine 339, asparagine 431, asparagine 513, asparagine 519, asparagine 528, asparagine 581, and asparagine 651. Residue serine 672 is the site of GPI-anchor amidated serine attachment. The propeptide at 673-696 (SARKLCFSVFLLLSLLMMFLTLLD) is removed in mature form.

It belongs to the PQQ oxidoreductase GdhB family. Pyrroloquinoline quinone serves as cofactor.

The protein resides in the cell membrane. The protein is HIPL2 protein (HIPL2) of Arabidopsis thaliana (Mouse-ear cress).